The sequence spans 352 residues: MAEKKTDKVKRLTELSHCAGCAAKLRASDLAQVLGGLKSTKGPQALVGFSTNDDAAVYRLAPGMAVVETVDFFPPVVDDPFQFGAIAAANALSDIYAMGARPLFALNLVCFPDELPLKVLSKILAGGQSKADEAGIPILGGHSIRDPEPKFGMAVTGVVHPKKVLTNAGAKPGDVLFLTKPLGSGIATTAIKRGVASKQLAKRALGVMTTLNRAAGEVFASGKFKVNALTDVTGYGLLGHLLEMMTAAKARATLDLERIPLIAEVPALAEDGVVPGGTKSNLAHVHKKVRFPEGLPECIQWVLADAQTNGGLLASVPARQALKALKALEAAGVDAALIGEVQAGKPGIDVVG.

The active site involves C21. Residues K24 and 51–53 (TND) each bind ATP. D54 serves as a coordination point for Mg(2+). Residues D71, D94, and 141–143 (GHS) each bind ATP. D94 is a Mg(2+) binding site. D231 serves as a coordination point for Mg(2+).

This sequence belongs to the selenophosphate synthase 1 family. Class I subfamily. As to quaternary structure, homodimer. It depends on Mg(2+) as a cofactor.

The catalysed reaction is hydrogenselenide + ATP + H2O = selenophosphate + AMP + phosphate + 2 H(+). Its function is as follows. Synthesizes selenophosphate from selenide and ATP. The sequence is that of Selenide, water dikinase from Myxococcus xanthus (strain DK1622).